The sequence spans 217 residues: Probable transaldolase (217 aa).

K83 acts as the Schiff-base intermediate with substrate in catalysis.

Belongs to the transaldolase family. Type 3B subfamily.

The protein localises to the cytoplasm. The catalysed reaction is D-sedoheptulose 7-phosphate + D-glyceraldehyde 3-phosphate = D-erythrose 4-phosphate + beta-D-fructose 6-phosphate. It functions in the pathway carbohydrate degradation; pentose phosphate pathway; D-glyceraldehyde 3-phosphate and beta-D-fructose 6-phosphate from D-ribose 5-phosphate and D-xylulose 5-phosphate (non-oxidative stage): step 2/3. Its function is as follows. Transaldolase is important for the balance of metabolites in the pentose-phosphate pathway. This is Probable transaldolase from Clostridium botulinum (strain Hall / ATCC 3502 / NCTC 13319 / Type A).